A 152-amino-acid chain; its full sequence is MKTPIELKILDSRIGSEFPLPAYATPGSAGMDLRAMIDTTMTIAPGETQLVPTGIAIHVADPGLAALILPRSGLGHKHGIVLGNLVGLVDSDYQGPLMVSCWNRSDTPFTLEIGDRLAQLVFVPVVQAQFKLVDEFDSSDRGEGGFGHSGTK.

Substrate is bound by residues 71 to 73 (RSG), Asn-84, 88 to 90 (LVD), and Met-98.

This sequence belongs to the dUTPase family. Requires Mg(2+) as cofactor.

It carries out the reaction dUTP + H2O = dUMP + diphosphate + H(+). It functions in the pathway pyrimidine metabolism; dUMP biosynthesis; dUMP from dCTP (dUTP route): step 2/2. Its function is as follows. This enzyme is involved in nucleotide metabolism: it produces dUMP, the immediate precursor of thymidine nucleotides and it decreases the intracellular concentration of dUTP so that uracil cannot be incorporated into DNA. In Shewanella oneidensis (strain ATCC 700550 / JCM 31522 / CIP 106686 / LMG 19005 / NCIMB 14063 / MR-1), this protein is Deoxyuridine 5'-triphosphate nucleotidohydrolase.